We begin with the raw amino-acid sequence, 521 residues long: Cytochrome P450 monooxygenase ABA2 (521 aa).

The helical transmembrane segment at 15-35 (AGHLGMAVTFTILVAFTIHVL) threads the bilayer. The N-linked (GlcNAc...) asparagine glycan is linked to N366. C458 is a heme binding site.

The protein belongs to the cytochrome P450 family. Heme serves as cofactor.

It localises to the membrane. Its pathway is hormone biosynthesis. Cytochrome P450 monooxygenase involved in the biosynthesis of abscisic acid (ABA), a phytohormone that acts antagonistically toward salicylic acid (SA), jasmonic acid (JA) and ethylene (ETH) signaling, to impede plant defense responses. During pathogen-host interaction, ABA plays a dual role in disease severity by increasing plant susceptibility and accelerating pathogenesis in the fungus itself. The first step of the pathway catalyzes the reaction from farnesyl diphosphate to alpha-ionylideneethane performed by the alpha-ionylideneethane synthase ABA3 via a three-step reaction mechanism involving 2 neutral intermediates, beta-farnesene and allofarnesene. The cytochrome P450 monooxygenase ABA1 might then be involved in the conversion of alpha-ionylideneethane to alpha-ionylideneacetic acid. Alpha-ionylideneacetic acid is further converted to abscisic acid in 2 steps involving the cytochrome P450 monooxygenase ABA2 and the short-chain dehydrogenase/reductase ABA4, via the intermediates 1'-deoxy-ABA or 1',4'-trans-diol-ABA, depending on the order of action of these 2 enzymes. ABA2 is responsible for the hydroxylation of carbon atom C-1' and ABA4 might be involved in the oxidation of the C-4' carbon atom. The polypeptide is Cytochrome P450 monooxygenase ABA2 (Pyricularia oryzae (strain 70-15 / ATCC MYA-4617 / FGSC 8958) (Rice blast fungus)).